A 183-amino-acid chain; its full sequence is Ribulose bisphosphate carboxylase small subunit, chloroplastic 3 (183 aa).

Residues 1–43 (MATTMLNRSVIVNKEVAKTPNFPRATKNNKGFASNAAVQKCRD) constitute a chloroplast transit peptide.

Belongs to the RuBisCO small chain family. As to quaternary structure, heterohexadecamer of 8 large and 8 small subunits.

It is found in the plastid. The protein localises to the chloroplast. Functionally, ruBisCO catalyzes two reactions: the carboxylation of D-ribulose 1,5-bisphosphate, the primary event in carbon dioxide fixation, as well as the oxidative fragmentation of the pentose substrate. Both reactions occur simultaneously and in competition at the same active site. Although the small subunit is not catalytic it is essential for maximal activity. This Acetabularia peniculus (Green alga) protein is Ribulose bisphosphate carboxylase small subunit, chloroplastic 3.